A 98-amino-acid polypeptide reads, in one-letter code: NADH-ubiquinone oxidoreductase chain 4L (98 aa).

The next 3 membrane-spanning stretches (helical) occupy residues Met1–Met21, Ser29–Leu49, and Leu61–Ile81.

It belongs to the complex I subunit 4L family. In terms of assembly, core subunit of respiratory chain NADH dehydrogenase (Complex I) which is composed of 45 different subunits.

The protein localises to the mitochondrion inner membrane. It carries out the reaction a ubiquinone + NADH + 5 H(+)(in) = a ubiquinol + NAD(+) + 4 H(+)(out). Functionally, core subunit of the mitochondrial membrane respiratory chain NADH dehydrogenase (Complex I) which catalyzes electron transfer from NADH through the respiratory chain, using ubiquinone as an electron acceptor. Part of the enzyme membrane arm which is embedded in the lipid bilayer and involved in proton translocation. This chain is NADH-ubiquinone oxidoreductase chain 4L (MT-ND4L), found in Elephas maximus (Indian elephant).